Consider the following 78-residue polypeptide: Major outer membrane lipoprotein Lpp (78 aa).

The first 20 residues, 1–20 (MKATKLVLGAVILGSTLLAG), serve as a signal peptide directing secretion. Cys-21 is lipidated: N-palmitoyl cysteine. A lipid anchor (S-diacylglycerol cysteine) is attached at Cys-21. 2 repeats span residues 24 to 34 (NAKIDQLSSDV) and 38 to 48 (NAKVDQLSNDV). Residues 27–75 (IDQLSSDVQTLNAKVDQLSNDVNAMRSDVQAAKDDAARANQRLDNMATK) are a coiled coil. Lys-78 is modified (N6-murein peptidoglycan lysine).

Belongs to the Lpp family. As to quaternary structure, homotrimer.

The protein resides in the cell outer membrane. It is found in the secreted. The protein localises to the cell wall. In terms of biological role, a highly abundant outer membrane lipoprotein that controls the distance between the inner and outer membranes. The only protein known to be covalently linked to the peptidoglycan network (PGN). Also non-covalently binds the PGN. The link between the cell outer membrane and PGN contributes to maintenance of the structural and functional integrity of the cell envelope, and maintains the correct distance between the PGN and the outer membrane. This chain is Major outer membrane lipoprotein Lpp, found in Shigella flexneri.